We begin with the raw amino-acid sequence, 993 residues long: General transcription factor II-I repeat domain-containing protein 1 (993 aa).

GTF2I-like repeat units follow at residues 117-211 (LGPT…EPKS) and 332-426 (LRET…DGTT). The interval 461-480 (GSRSEKSSISDECEPGTSSE) is disordered. GTF2I-like repeat units lie at residues 597–691 (DGIG…LEDC), 727–821 (LSRI…RPDD), and 824–918 (ANRL…ICSE). The segment at 916–961 (CSEPPKIKNGNTGPKRKRKRVSEGNSISSASSNCSSSSSSSSNMDP) is disordered. A Nuclear localization signal motif is present at residues 929 to 936 (PKRKRKRV). Positions 938 to 961 (EGNSISSASSNCSSSSSSSSNMDP) are enriched in low complexity.

The protein belongs to the TFII-I family. As to quaternary structure, interacts (via repeats 4-5) with foxh1/fast1 (via Fork-head domain). Interacts with smad2 and smad3 (via MH1 domain) in a ligand (activin)-dependent manner. Interacts with pou5f1.1/oct-25 to form a repression complex on the promoters of the gsc and mix2 genes. In terms of tissue distribution, uniformly expressed in the embryo in pre- and early gastrula stages. Enriched in the head region of early neurula through tailbud stages.

The protein localises to the nucleus. Transcription factor that activates a subset of organizer-specific genes. Binds to the distal element (DE) of the gsc promoter to regulate its expression. In the presence of pou5f1.1/oct-25, forms a repression complex on the promoter of the gsc and mix2 genes to inhibit their transcription. The polypeptide is General transcription factor II-I repeat domain-containing protein 1 (gtf2ird1) (Xenopus laevis (African clawed frog)).